Consider the following 194-residue polypeptide: ATP-dependent Clp protease proteolytic subunit 3 (194 aa).

The Nucleophile role is filled by serine 96. Histidine 121 is an active-site residue.

The protein belongs to the peptidase S14 family. As to quaternary structure, fourteen ClpP subunits assemble into 2 heptameric rings which stack back to back to give a disk-like structure with a central cavity, resembling the structure of eukaryotic proteasomes.

It is found in the cytoplasm. It catalyses the reaction Hydrolysis of proteins to small peptides in the presence of ATP and magnesium. alpha-casein is the usual test substrate. In the absence of ATP, only oligopeptides shorter than five residues are hydrolyzed (such as succinyl-Leu-Tyr-|-NHMec, and Leu-Tyr-Leu-|-Tyr-Trp, in which cleavage of the -Tyr-|-Leu- and -Tyr-|-Trp bonds also occurs).. Its function is as follows. Cleaves peptides in various proteins in a process that requires ATP hydrolysis. Has a chymotrypsin-like activity. Plays a major role in the degradation of misfolded proteins. In Prochlorococcus marinus (strain NATL2A), this protein is ATP-dependent Clp protease proteolytic subunit 3.